We begin with the raw amino-acid sequence, 213 residues long: Uridine kinase (213 aa).

15-22 serves as a coordination point for ATP; the sequence is GASASGKS.

Belongs to the uridine kinase family.

It is found in the cytoplasm. The catalysed reaction is uridine + ATP = UMP + ADP + H(+). It carries out the reaction cytidine + ATP = CMP + ADP + H(+). It functions in the pathway pyrimidine metabolism; CTP biosynthesis via salvage pathway; CTP from cytidine: step 1/3. The protein operates within pyrimidine metabolism; UMP biosynthesis via salvage pathway; UMP from uridine: step 1/1. The sequence is that of Uridine kinase from Klebsiella pneumoniae (strain 342).